A 114-amino-acid chain; its full sequence is Large ribosomal subunit protein bL20 (114 aa).

This sequence belongs to the bacterial ribosomal protein bL20 family.

Binds directly to 23S ribosomal RNA and is necessary for the in vitro assembly process of the 50S ribosomal subunit. It is not involved in the protein synthesizing functions of that subunit. The polypeptide is Large ribosomal subunit protein bL20 (Parabacteroides distasonis (strain ATCC 8503 / DSM 20701 / CIP 104284 / JCM 5825 / NCTC 11152)).